The sequence spans 267 residues: Tryptophan synthase alpha chain (267 aa).

Residues glutamate 49 and aspartate 60 each act as proton acceptor in the active site.

Belongs to the TrpA family. Tetramer of two alpha and two beta chains.

The catalysed reaction is (1S,2R)-1-C-(indol-3-yl)glycerol 3-phosphate + L-serine = D-glyceraldehyde 3-phosphate + L-tryptophan + H2O. It functions in the pathway amino-acid biosynthesis; L-tryptophan biosynthesis; L-tryptophan from chorismate: step 5/5. Its function is as follows. The alpha subunit is responsible for the aldol cleavage of indoleglycerol phosphate to indole and glyceraldehyde 3-phosphate. The sequence is that of Tryptophan synthase alpha chain from Methylococcus capsulatus (strain ATCC 33009 / NCIMB 11132 / Bath).